Consider the following 444-residue polypeptide: Argininosuccinate synthase (444 aa).

ATP is bound by residues 17–25 (AFSGGLDTS) and Ala43. Residue Tyr99 coordinates L-citrulline. ATP is bound by residues Gly129 and Thr131. Residues Thr131, Asn135, and Asp136 each contribute to the L-aspartate site. Asn135 contacts L-citrulline. Residue Asp136 participates in ATP binding. L-citrulline-binding residues include Arg139 and Ser192. Position 194 (Asp194) interacts with ATP. Thr201, Glu203, and Glu280 together coordinate L-citrulline.

The protein belongs to the argininosuccinate synthase family. Type 2 subfamily. In terms of assembly, homotetramer.

It localises to the cytoplasm. The catalysed reaction is L-citrulline + L-aspartate + ATP = 2-(N(omega)-L-arginino)succinate + AMP + diphosphate + H(+). It participates in amino-acid biosynthesis; L-arginine biosynthesis; L-arginine from L-ornithine and carbamoyl phosphate: step 2/3. The chain is Argininosuccinate synthase from Delftia acidovorans (strain DSM 14801 / SPH-1).